The following is a 115-amino-acid chain: Toxin CSTX-9 (115 aa).

A signal peptide spans 1 to 20 (MKVLVICAVLFLAIFSNSSA). A propeptide spanning residues 21 to 47 (ETEDDFLEDESFEADDVIPFLAREQVR) is cleaved from the precursor. Cystine bridges form between Cys-53–Cys-68, Cys-60–Cys-77, Cys-67–Cys-95, and Cys-79–Cys-93.

The protein belongs to the neurotoxin 19 (CSTX) family. As to quaternary structure, monomer. Interacts with CSTX-13 (AC P83919) (Kd=370 nM), but does not interact with CSTX-1 (AC P81694). Expressed by the venom gland.

The protein resides in the secreted. It is found in the target cell membrane. Its function is as follows. Synergistic toxin that induces or increases a cytolytic effect when combined with CSTX-1 (AC P81694) or CSTX-13 (AC P83919). Potassium ions and M-ctenitoxin-Cs1a (AC P83619) have also an effect on its activity. When alone, has no insecticidal activity. The chain is Toxin CSTX-9 from Cupiennius salei (American wandering spider).